Here is a 105-residue protein sequence, read N- to C-terminus: Nucleoid-associated protein MW0434 (105 aa).

The tract at residues 1-33 (MRGGGNMQQMMKQMQKMQKKMAQEQEKLKEERI) is disordered. Residues 7–16 (MQQMMKQMQK) are compositionally biased toward low complexity. The segment covering 21–33 (MAQEQEKLKEERI) has biased composition (basic and acidic residues).

The protein belongs to the YbaB/EbfC family. As to quaternary structure, homodimer.

The protein localises to the cytoplasm. It localises to the nucleoid. Binds to DNA and alters its conformation. May be involved in regulation of gene expression, nucleoid organization and DNA protection. In Staphylococcus aureus (strain MW2), this protein is Nucleoid-associated protein MW0434.